The following is a 663-amino-acid chain: Protein MICRORCHIDIA 6 (663 aa).

The interval 1-77 (MSHDRSVNVS…PADDAGVTSS (77 aa)) is disordered. The segment covering 49 to 62 (SVGQSAGQSSTSVV) has biased composition (polar residues). A Nuclear localization signal motif is present at residues 552–559 (KRKEHPDS). The stretch at 614-659 (DRKVRSQNLEVKAMNLRSELENYKSEYERLMVELQALDLVKDEHRR) forms a coiled coil.

The protein belongs to the MORC ATPase protein family. As to quaternary structure, homodimer and heterodimers with MORC1/CRT1 and MORC2. Interacts directly with SUVH9. Component of an RNA-directed DNA methylation (RdDM) complex that contains at least MORC6, MORC1/CRT1, MORC2, SWI3D and SUVH9. Stimulated by interaction with DMS3. Interacts with IDN2, SWI3B, SWI3C and SWI3D. Requires Mg(2+) as cofactor. Mn(2+) serves as cofactor.

It localises to the nucleus. With respect to regulation, stimulated by DMS3. Its function is as follows. Involved in RNA-directed DNA methylation (RdDM) as a component of the RdDM machinery and required for gene silencing. Together with SUVH2 and SUVH9, regulates the silencing of some transposable elements (TEs). Exhibits ATPase activity. May also be involved in the regulation of chromatin architecture/condensation to maintain gene silencing. Binds DNA/RNA in a non-specific manner and exhibits endonuclease activity. Probably involved in DNA repair. Positive regulator of defense against the oomycete Hyaloperonospora arabidopsidis (Hpa). This is Protein MICRORCHIDIA 6 from Arabidopsis thaliana (Mouse-ear cress).